Here is a 402-residue protein sequence, read N- to C-terminus: Putative cytochrome P450 123 (402 aa).

Cys350 is a binding site for heme.

Belongs to the cytochrome P450 family. Heme is required as a cofactor.

This Mycobacterium bovis (strain ATCC BAA-935 / AF2122/97) protein is Putative cytochrome P450 123 (cyp123).